The sequence spans 296 residues: MRIILITGMSGSGKSVALNVLEDAGYYCVDNLPAQFIPELARYLADQGYTHLGVATDIRSRESLRKVPETITQLRKEHDVRMLFLTASTNALVQRYSETRRRHPLSIRNGRPDAGNPPSAAKGPDTSLIEAIEMERELLSPLADPAHRIDTSTLRTNALRAYIKEFISDEPHDITLMFESFGFKHGVPTDADLVFDVRSLPNPYYDTQLRPLTGRDQPVIDFLQSQPMVLAMAEDIRAYVEKWLPSFIADNRSYLTVAIGCTGGQHRSVYIAERLATYFRAHGNVLVRHRELAVDA.

Residue 8–15 (GMSGSGKS) coordinates ATP. GTP is bound at residue 57–60 (DIRS). Positions 99–124 (TRRRHPLSIRNGRPDAGNPPSAAKGP) are disordered.

It belongs to the RapZ-like family.

Displays ATPase and GTPase activities. This Ralstonia nicotianae (strain ATCC BAA-1114 / GMI1000) (Ralstonia solanacearum) protein is Nucleotide-binding protein RSc0403.